A 475-amino-acid polypeptide reads, in one-letter code: MVSTTKSTGSVTQIIGPVLDIAFPNGQLPKVFNALKVQSSEGTITCEVQQLLGDNKVRAVSMSSTEGLQRGVEVIDTGSPISVPVGTDTLGRIFNVLGEPVDNLGPVDSESTLPIHRPAPAFTKLETKPNIFETGIKVVDLLAPYRRGGKIGLFGGAGVGKTVLIMELINNIAKAHGGVSVFGGVGERTREGNDLYMEMKESKVIDADNLKESKVALVYGQMNEPPGARMRVGLTALTMAEYFRDINKQDVLLFIDNIFRFVQAGSEVSALLGRMPSAVGYQPTLATEMGALQERITSTTEGSITSIQAVYVPADDLTDPVPATTFAHLDATTVLSRNLAAKGIYPAVDPLDSTSTMLQPGIVGTEHYSTAQEVKSTLQRYKELQDIIAILGLDELSEEDRQTVSRARKIERFLSQPFFVAEVFTGSPGKYVSLEDAIKGFQMILKGNLDDLPEQAFYLVGDIDEAIQKADSMKD.

155 to 162 (GGAGVGKT) lines the ATP pocket.

It belongs to the ATPase alpha/beta chains family. As to quaternary structure, F-type ATPases have 2 components, CF(1) - the catalytic core - and CF(0) - the membrane proton channel. CF(1) has five subunits: alpha(3), beta(3), gamma(1), delta(1), epsilon(1). CF(0) has four main subunits: a(1), b(1), b'(1) and c(9-12).

It localises to the plastid. The protein resides in the chloroplast thylakoid membrane. It catalyses the reaction ATP + H2O + 4 H(+)(in) = ADP + phosphate + 5 H(+)(out). Its function is as follows. Produces ATP from ADP in the presence of a proton gradient across the membrane. The catalytic sites are hosted primarily by the beta subunits. This is ATP synthase subunit beta, chloroplastic from Pyropia yezoensis (Susabi-nori).